Reading from the N-terminus, the 436-residue chain is GTPase Der (436 aa).

2 EngA-type G domains span residues 4 to 167 (PVVA…PKDH) and 176 to 351 (IKFC…DNHA). GTP contacts are provided by residues 10 to 17 (GRPNVGKS), 57 to 61 (DTGGI), 119 to 122 (NKID), 182 to 189 (GRPNVGKS), 229 to 233 (DTAGM), and 294 to 297 (NKWD). Residues 352–436 (MRVQTNVLNE…PIKIIARPRK (85 aa)) enclose the KH-like domain.

The protein belongs to the TRAFAC class TrmE-Era-EngA-EngB-Septin-like GTPase superfamily. EngA (Der) GTPase family. As to quaternary structure, associates with the 50S ribosomal subunit.

In terms of biological role, GTPase that plays an essential role in the late steps of ribosome biogenesis. The chain is GTPase Der from Geobacillus thermodenitrificans (strain NG80-2).